A 447-amino-acid chain; its full sequence is High-affinity gluconate transporter (447 aa).

Residues 1–21 (MHVLNILWVVFGIGLMLVLNL) form a helical membrane-spanning segment. Topologically, residues 22–28 (KFKINSM) are periplasmic. The helical transmembrane segment at 29-49 (VALLVAALSVGMLAGMDLMSL) threads the bilayer. The Cytoplasmic segment spans residues 50–54 (LHTMK). Residues 55 to 75 (AGFGNTLGELAIIVVFGAVIG) traverse the membrane as a helical segment. Residues 76–103 (KLMVDSGAAHQIAHTLLARLGLRYVQLS) lie on the Periplasmic side of the membrane. Residues 104 to 124 (VIIIGLIFGLAMFYEVAFIML) traverse the membrane as a helical segment. The Cytoplasmic segment spans residues 125 to 126 (AP). Residues 127–147 (LVIVIAAEAKIPFLKLAIPAV) traverse the membrane as a helical segment. Over 148–175 (AAATTAHSLFPPQPGPVALVNAYGADMG) the chain is Periplasmic. A helical transmembrane segment spans residues 176–196 (MVYIYGVLVTIPSVICAGLIL). Topologically, residues 197-224 (PKFLGNLERPTPSFLKADQPVDMNNLPS) are cytoplasmic. A helical transmembrane segment spans residues 225-245 (FGVSILVPLIPAIIMISTTIA). Residues 246 to 260 (NIWLVKDTPAWEVVN) lie on the Periplasmic side of the membrane. Residues 261 to 281 (FIGSSPIAMFIAMVVAFVLFG) form a helical membrane-spanning segment. At 282-294 (TARGHDMQWVMNA) the chain is on the cytoplasmic side. Residues 295 to 315 (FESAVKSIAMVILIIGAGGVL) traverse the membrane as a helical segment. Residues 316–329 (KQTIIDTGIGDTIG) are Periplasmic-facing. A helical transmembrane segment spans residues 330–350 (MLMSHGNISPYIMAWLITVLI). A topological domain (cytoplasmic) is located at residue Arg351. A helical transmembrane segment spans residues 352-372 (LATGQGVVSAMTAAGIISAAI). The Periplasmic portion of the chain corresponds to 373-374 (LD). A helical transmembrane segment spans residues 375-395 (PATGQLVGVNPALLVLATAAG). At 396–426 (SNTLTHINDASFWLFKGYFDLSVKDTLKTWG) the chain is on the cytoplasmic side. The chain crosses the membrane as a helical span at residues 427 to 447 (LLELVNSVVGLIIVLIISMVA).

It belongs to the GntP permease family.

The protein localises to the cell inner membrane. It participates in carbohydrate acid metabolism; D-gluconate degradation. High-affinity gluconate transporter with fairly broad specificity, including low affinity for glucuronate, several disaccharides, and some hexoses, but not glucose. The chain is High-affinity gluconate transporter (gntP) from Escherichia coli (strain K12).